The chain runs to 491 residues: Glutamyl-tRNA(Gln) amidotransferase subunit A (491 aa).

Active-site charge relay system residues include K79 and S158. Catalysis depends on S182, which acts as the Acyl-ester intermediate.

The protein belongs to the amidase family. GatA subfamily. In terms of assembly, heterotrimer of A, B and C subunits.

The catalysed reaction is L-glutamyl-tRNA(Gln) + L-glutamine + ATP + H2O = L-glutaminyl-tRNA(Gln) + L-glutamate + ADP + phosphate + H(+). Allows the formation of correctly charged Gln-tRNA(Gln) through the transamidation of misacylated Glu-tRNA(Gln) in organisms which lack glutaminyl-tRNA synthetase. The reaction takes place in the presence of glutamine and ATP through an activated gamma-phospho-Glu-tRNA(Gln). This chain is Glutamyl-tRNA(Gln) amidotransferase subunit A, found in Anaplasma phagocytophilum (strain HZ).